A 473-amino-acid polypeptide reads, in one-letter code: Reticulon-4 receptor (473 aa).

An N-terminal signal peptide occupies residues 1 to 26 (MKRASAGGSRLLAWVLWLQAWQVAAP). 2 disulfide bridges follow: cysteine 27–cysteine 33 and cysteine 31–cysteine 43. One can recognise an LRRNT domain in the interval 27 to 54 (CPGACVCYNEPKVTTSCPQQGLQAVPVG). LRR repeat units follow at residues 55-79 (IPAASQRIFLHGNRISHVPAASFRA), 81-103 (RNLTILWLHSNVLARIDAAAFTG), 104-128 (LALLEQLDLSDNAQLRSVDPATFHG), 129-152 (LGRLHTLHLDRCGLQELGPGLFRG), 153-176 (LAALQYLYLQDNALQALPDDTFRD), 178-200 (GNLTHLFLHGNRISSVPERAFRG), 202-224 (HSLDRLLLHQNRVAHVHPHAFRD), 225-248 (LGRLMTLYLFANNLSALPTEALAP), and 250-273 (RALQYLRLNDNPWVCDCRARPLWA). Asparagine 82 carries N-linked (GlcNAc...) asparagine glycosylation. N-linked (GlcNAc...) asparagine glycosylation is present at asparagine 179. The 51-residue stretch at 260–310 (NPWVCDCRARPLWAWLQKFRGSSSEVPCSLPQRLAGRDLKRLAANDLQGCA) folds into the LRRCT domain. Intrachain disulfides connect cysteine 264/cysteine 287, cysteine 266/cysteine 335, and cysteine 309/cysteine 336. A disordered region spans residues 346 to 447 (VLEPGRPASA…GGGTGDSEGS (102 aa)). The span at 413–429 (PRRRPGCSRKNRTRSHC) shows a compositional bias: basic residues. Residues 434–445 (AGSGGGGTGDSE) are compositionally biased toward gly residues. The GPI-anchor amidated serine moiety is linked to residue serine 447. Positions 448–473 (GALPSLTCSLTPLGLALVLWTVLGPC) are cleaved as a propeptide — removed in mature form.

The protein belongs to the Nogo receptor family. In terms of assembly, homodimer. Interacts with MAG. Interacts with RTN4. Interacts with NGFR. Interacts with LINGO1. Interacts with KIAA0319L. Interacts with OLFM1; this inhibits interaction with LINGO1 and NGFR. Interacts with OMG. N-glycosylated. O-glycosylated. Contains terminal sialic acid groups on its glycan chains. As to expression, widespread in the brain but highest levels in the gray matter. Low levels in heart and kidney; not expressed in oligodendrocytes (white matter).

It localises to the cell membrane. Its subcellular location is the membrane raft. The protein localises to the cell projection. The protein resides in the dendrite. It is found in the axon. It localises to the perikaryon. Its function is as follows. Receptor for RTN4, OMG and MAG. Functions as a receptor for the sialylated gangliosides GT1b and GM1. Besides, functions as a receptor for chondroitin sulfate proteoglycans. Can also bind heparin. Intracellular signaling cascades are triggered via the coreceptor NGFR. Signaling mediates activation of Rho and downstream reorganization of the actin cytoskeleton. Mediates axonal growth inhibition. Plays a role in regulating axon regeneration and neuronal plasticity in the adult central nervous system. Plays a role in postnatal brain development. Required for normal axon migration across the brain midline and normal formation of the corpus callosum. Protects motoneurons against apoptosis; protection against apoptosis is probably mediated via interaction with MAG. Acts in conjunction with RTN4 and LINGO1 in regulating neuronal precursor cell motility during cortical development. Like other family members, plays a role in restricting the number dendritic spines and the number of synapses that are formed during brain development. The protein is Reticulon-4 receptor (RTN4R) of Homo sapiens (Human).